The sequence spans 377 residues: Chaperone protein DnaJ (377 aa).

The 66-residue stretch at 5 to 70 folds into the J domain; it reads DYYEVLGLQK…QKRAAYDQYG (66 aa). A CR-type zinc finger spans residues 134–212; sequence GCKKDIRLST…CHGDGRVQKA (79 aa). Residues C147, C150, C164, C167, C186, C189, C200, and C203 each coordinate Zn(2+). 4 CXXCXGXG motif repeats span residues 147-154, 164-171, 186-193, and 200-207; these read CDNCHGTG, CPHCHGAG, CPSCHGTG, and CHSCHGDG.

The protein belongs to the DnaJ family. In terms of assembly, homodimer. The cofactor is Zn(2+).

Its subcellular location is the cytoplasm. Participates actively in the response to hyperosmotic and heat shock by preventing the aggregation of stress-denatured proteins and by disaggregating proteins, also in an autonomous, DnaK-independent fashion. Unfolded proteins bind initially to DnaJ; upon interaction with the DnaJ-bound protein, DnaK hydrolyzes its bound ATP, resulting in the formation of a stable complex. GrpE releases ADP from DnaK; ATP binding to DnaK triggers the release of the substrate protein, thus completing the reaction cycle. Several rounds of ATP-dependent interactions between DnaJ, DnaK and GrpE are required for fully efficient folding. Also involved, together with DnaK and GrpE, in the DNA replication of plasmids through activation of initiation proteins. The polypeptide is Chaperone protein DnaJ (Haemophilus ducreyi (strain 35000HP / ATCC 700724)).